A 172-amino-acid chain; its full sequence is Translationally-controlled tumor protein (172 aa).

The 172-residue stretch at 1 to 172 folds into the TCTP domain; that stretch reads MIIYRDLISH…FKDGLEMEKC (172 aa). At serine 46 the chain carries Phosphoserine; by PLK1. Phosphoserine is present on serine 53. Position 64 is a phosphoserine; by PLK1 (serine 64). A required for reduction of TSC22D1 protein stability region spans residues 70–172; that stretch reads VDIVMNHHLQ…FKDGLEMEKC (103 aa).

The protein belongs to the TCTP family. Homodimer. Interacts with STEAP3. Interacts with TSC22D1; interaction results in the destabilization of TSC22D1 protein. In terms of tissue distribution, found in several healthy and tumoral cells including erythrocytes, hepatocytes, macrophages, platelets, keratinocytes, erythroleukemia cells, gliomas, melanomas, hepatoblastomas, and lymphomas. It cannot be detected in kidney and renal cell carcinoma (RCC). Expressed in placenta and prostate.

The protein resides in the cytoplasm. In terms of biological role, involved in calcium binding and microtubule stabilization. Acts as a negative regulator of TSC22D1-mediated apoptosis, via interaction with and destabilization of TSC22D1 protein. The sequence is that of Translationally-controlled tumor protein (TPT1) from Homo sapiens (Human).